A 1176-amino-acid chain; its full sequence is Chromosome partition protein Smc (1176 aa).

32-39 (PNGCGKSN) is an ATP binding site. Residues 169 to 506 (GVSRYKERRR…VKLQEDVQKQ (338 aa)) are a coiled coil. The region spanning 521–623 (LGRLWQKLHI…TAPDLGQALA (103 aa)) is the SMC hinge domain. Coiled coils occupy residues 653–947 (DSEQ…LAAM) and 987–1024 (ERKE…LQAT).

The protein belongs to the SMC family. As to quaternary structure, homodimer.

It localises to the cytoplasm. Its function is as follows. Required for chromosome condensation and partitioning. This Bordetella petrii (strain ATCC BAA-461 / DSM 12804 / CCUG 43448) protein is Chromosome partition protein Smc.